Here is a 146-residue protein sequence, read N- to C-terminus: UPF0260 protein Sden_1632 (146 aa).

Belongs to the UPF0260 family.

In Shewanella denitrificans (strain OS217 / ATCC BAA-1090 / DSM 15013), this protein is UPF0260 protein Sden_1632.